Here is a 590-residue protein sequence, read N- to C-terminus: Myo-inositol transporter 3C (590 aa).

At Met-1–Cys-63 the chain is on the cytoplasmic side. The chain crosses the membrane as a helical span at residues Phe-64–Ala-86. The Extracellular portion of the chain corresponds to Leu-87–Glu-105. The chain crosses the membrane as a helical span at residues Ile-106–Gly-126. Residues Asp-127–Lys-132 lie on the Cytoplasmic side of the membrane. The helical transmembrane segment at Val-133–Tyr-153 threads the bilayer. At Ser-154–Arg-162 the chain is on the extracellular side. The chain crosses the membrane as a helical span at residues Ile-163–Thr-183. Residues Ala-184–Cys-192 are Cytoplasmic-facing. A helical transmembrane segment spans residues Ile-193 to Gly-213. At Val-214–Arg-222 the chain is on the extracellular side. Residues Leu-223–Pro-243 traverse the membrane as a helical segment. Residues Glu-244–Gln-325 lie on the Cytoplasmic side of the membrane. A helical membrane pass occupies residues Leu-326–Thr-346. The Extracellular portion of the chain corresponds to Asn-347–Ala-349. Residues Leu-350 to Val-370 form a helical membrane-spanning segment. The Cytoplasmic segment spans residues Asp-371–Arg-376. The helical transmembrane segment at Gly-377–Phe-397 threads the bilayer. The Extracellular portion of the chain corresponds to His-398–Lys-417. A helical transmembrane segment spans residues Leu-418 to Ser-438. Residues His-439–Ser-454 are Cytoplasmic-facing. A helical transmembrane segment spans residues Val-455–Tyr-475. Residues Leu-476–Ser-485 lie on the Extracellular side of the membrane. Residues Gly-486–Tyr-506 form a helical membrane-spanning segment. Residues Pro-507–Arg-590 lie on the Cytoplasmic side of the membrane.

The protein belongs to the major facilitator superfamily. Sugar transporter (TC 2.A.1.1) family.

It is found in the cell membrane. The catalysed reaction is myo-inositol(out) + H(+)(out) = myo-inositol(in) + H(+)(in). In terms of biological role, major transporter for myo-inositol. Plays a role in the traversal of the host blood-brain barrier. This Cryptococcus neoformans var. grubii serotype A (strain H99 / ATCC 208821 / CBS 10515 / FGSC 9487) (Filobasidiella neoformans var. grubii) protein is Myo-inositol transporter 3C.